A 97-amino-acid chain; its full sequence is U-reduvitoxin-Pr10a (97 aa).

The N-terminal stretch at 1–18 (MKTALFLVFALAFIAVEG) is a signal peptide. Pacifastin domains follow at residues 22-59 (KACSKPGQTVLAPDGCNHCRCSKNGIIMGCTKKMCPPR) and 62-97 (KQSCKPGATFKHKDGCNTCKCSDDGKSARCTARLCW). Cystine bridges form between Cys-24–Cys-42, Cys-37–Cys-56, and Cys-40–Cys-51. Residues 57 to 59 (PPR) form a pro-Pro-Arg motif necessary for proteolytic processing region. Cystine bridges form between Cys-65-Cys-82, Cys-77-Cys-96, and Cys-80-Cys-91.

Belongs to the protease inhibitor I19 family. In terms of tissue distribution, expressed by the venom gland.

Its subcellular location is the secreted. Inhibits trypsin activity and prophenoloxidase (PPO) activation, an enzyme essential for both clotting and insect innate immune responses. It does not inhibit activity of chymotrypsin and protease K, and has no effect on phenoloxidase (PO) activity. The sequence is that of U-reduvitoxin-Pr10a from Platymeris rhadamanthus (Red spot assassin bug).